The chain runs to 621 residues: Glutamyl-tRNA(Gln) amidotransferase subunit E (621 aa).

Belongs to the GatB/GatE family. GatE subfamily. As to quaternary structure, heterodimer of GatD and GatE.

It catalyses the reaction L-glutamyl-tRNA(Gln) + L-glutamine + ATP + H2O = L-glutaminyl-tRNA(Gln) + L-glutamate + ADP + phosphate + H(+). Functionally, allows the formation of correctly charged Gln-tRNA(Gln) through the transamidation of misacylated Glu-tRNA(Gln) in organisms which lack glutaminyl-tRNA synthetase. The reaction takes place in the presence of glutamine and ATP through an activated gamma-phospho-Glu-tRNA(Gln). The GatDE system is specific for glutamate and does not act on aspartate. This is Glutamyl-tRNA(Gln) amidotransferase subunit E from Methanobrevibacter smithii (strain ATCC 35061 / DSM 861 / OCM 144 / PS).